Reading from the N-terminus, the 460-residue chain is Phosphoenolpyruvate carboxylase (460 aa).

This sequence belongs to the PEPCase type 2 family. In terms of assembly, homotetramer. Mg(2+) is required as a cofactor.

It carries out the reaction oxaloacetate + phosphate = phosphoenolpyruvate + hydrogencarbonate. Its function is as follows. Catalyzes the irreversible beta-carboxylation of phosphoenolpyruvate (PEP) to form oxaloacetate (OAA), a four-carbon dicarboxylic acid source for the tricarboxylic acid cycle. The protein is Phosphoenolpyruvate carboxylase of Pyrobaculum aerophilum (strain ATCC 51768 / DSM 7523 / JCM 9630 / CIP 104966 / NBRC 100827 / IM2).